Here is a 143-residue protein sequence, read N- to C-terminus: Small ribosomal subunit protein uS12 (143 aa).

A compositionally biased stretch (basic residues) spans 1–20 (MGKCRGLRTARKLRSHRRDQ). The tract at residues 1–26 (MGKCRGLRTARKLRSHRRDQKWHDKQ) is disordered. Residue Lys-37 forms a Glycyl lysine isopeptide (Lys-Gly) (interchain with G-Cter in SUMO2) linkage. Lys-54 carries the post-translational modification N6-succinyllysine. A 3-hydroxyproline modification is found at Pro-62. Lys-135 bears the N6-acetyllysine mark.

Belongs to the universal ribosomal protein uS12 family. In terms of assembly, component of the 40S small ribosomal subunit. Part of the small subunit (SSU) processome, composed of more than 70 proteins and the RNA chaperone small nucleolar RNA (snoRNA) U3. In terms of processing, hydroxylation at Pro-62 affects translation termination efficiency.

It localises to the cytoplasm. It is found in the cytosol. The protein resides in the rough endoplasmic reticulum. Its subcellular location is the nucleus. The protein localises to the nucleolus. In terms of biological role, component of the ribosome, a large ribonucleoprotein complex responsible for the synthesis of proteins in the cell. The small ribosomal subunit (SSU) binds messenger RNAs (mRNAs) and translates the encoded message by selecting cognate aminoacyl-transfer RNA (tRNA) molecules. The large subunit (LSU) contains the ribosomal catalytic site termed the peptidyl transferase center (PTC), which catalyzes the formation of peptide bonds, thereby polymerizing the amino acids delivered by tRNAs into a polypeptide chain. The nascent polypeptides leave the ribosome through a tunnel in the LSU and interact with protein factors that function in enzymatic processing, targeting, and the membrane insertion of nascent chains at the exit of the ribosomal tunnel. Plays an important role in translational accuracy. Part of the small subunit (SSU) processome, first precursor of the small eukaryotic ribosomal subunit. During the assembly of the SSU processome in the nucleolus, many ribosome biogenesis factors, an RNA chaperone and ribosomal proteins associate with the nascent pre-rRNA and work in concert to generate RNA folding, modifications, rearrangements and cleavage as well as targeted degradation of pre-ribosomal RNA by the RNA exosome. This is Small ribosomal subunit protein uS12 (RPS23) from Bos taurus (Bovine).